Here is a 119-residue protein sequence, read N- to C-terminus: MARFVAVALLVLLSLSGLEAIQHAPKIQVYSRHPAENGKPNFLNCYVSGFHPSDIEVDLLKNGKKIEKVEHSDLSFSKDWSFYLLYYTEFTPNDKDEYACRVSHVTFSTPKTVKWDRNM.

Residues 1–20 (MARFVAVALLVLLSLSGLEA) form the signal peptide. One can recognise an Ig-like C1-type domain in the interval 25–114 (PKIQVYSRHP…VTFSTPKTVK (90 aa)). Cys45 and Cys100 are disulfide-bonded.

Belongs to the beta-2-microglobulin family. Heterodimer of an alpha chain and a beta chain. Beta-2-microglobulin is the beta-chain of major histocompatibility complex class I molecules.

Its subcellular location is the secreted. Its function is as follows. Component of the class I major histocompatibility complex (MHC). Involved in the presentation of peptide antigens to the immune system. This is Beta-2-microglobulin (B2M) from Plecturocebus moloch (Dusky titi monkey).